A 784-amino-acid polypeptide reads, in one-letter code: Cation/H(+) antiporter 26 (784 aa).

11 consecutive transmembrane segments (helical) span residues 38-58 (PLLL…QALL), 61-81 (LANV…PSAL), 97-117 (YFII…ISTA), 130-150 (LAII…AIAC), 201-221 (LALS…LLLI), 240-260 (FTKV…FNWI), 286-306 (TFLS…LGLV), 321-341 (IGSF…GNKV), 351-371 (IISL…SIVL), 376-396 (FQVP…QGIY), and 413-433 (EAFG…TAIV).

The protein belongs to the monovalent cation:proton antiporter 2 (CPA2) transporter (TC 2.A.37) family. CHX (TC 2.A.37.4) subfamily. Expressed in pollen.

It is found in the membrane. Its function is as follows. May operate as a cation/H(+) antiporter. The chain is Cation/H(+) antiporter 26 (CHX26) from Arabidopsis thaliana (Mouse-ear cress).